Reading from the N-terminus, the 221-residue chain is Small ribosomal subunit protein eS1 (221 aa).

This sequence belongs to the eukaryotic ribosomal protein eS1 family.

This Pyrobaculum aerophilum (strain ATCC 51768 / DSM 7523 / JCM 9630 / CIP 104966 / NBRC 100827 / IM2) protein is Small ribosomal subunit protein eS1.